The sequence spans 813 residues: Phosphate transporter PHO1 homolog 3 (813 aa).

Residues M1–K359 enclose the SPX domain. The Cytoplasmic portion of the chain corresponds to M1–T411. A disordered region spans residues E214 to S266. The span at M230 to N241 shows a compositional bias: acidic residues. The chain crosses the membrane as a helical span at residues F412–I432. Over R433 to M450 the chain is Extracellular. Residues F451–I471 form a helical membrane-spanning segment. Residues Y472–R496 are Cytoplasmic-facing. A helical membrane pass occupies residues Q497–L517. The Extracellular portion of the chain corresponds to D518–E533. A helical transmembrane segment spans residues I534–F554. The Cytoplasmic segment spans residues Y555–R684. The 196-residue stretch at K618–N813 folds into the EXS domain. The chain crosses the membrane as a helical span at residues V685–H705. Residues D706 to K729 are Extracellular-facing. The chain crosses the membrane as a helical span at residues V730–L750. At D751–N813 the chain is on the cytoplasmic side.

Belongs to the SYG1 (TC 2.A.94) family. Expressed in vascular cylinder of roots, leaves and filaments. Expressed in receptacle and stigma apex.

Its subcellular location is the cell membrane. In terms of biological role, may transport inorganic phosphate (Pi). This Arabidopsis thaliana (Mouse-ear cress) protein is Phosphate transporter PHO1 homolog 3 (PHO1;H3).